Here is a 270-residue protein sequence, read N- to C-terminus: Phosphatidylglycerol--prolipoprotein diacylglyceryl transferase (270 aa).

The next 4 membrane-spanning stretches (helical) occupy residues 19-39 (FPVYWYGIIIGTGVLLGLWLA), 56-76 (LVLIAVPIAILFARMYYVIFE), 92-112 (QGGLAIHGGLIGAVITGILFA), and 116-136 (GVSFWKLADIAAPSILLGQAI). Arg138 provides a ligand contact to a 1,2-diacyl-sn-glycero-3-phospho-(1'-sn-glycerol). A run of 3 helical transmembrane segments spans residues 178–198 (HPTFLYESLWNFAGVILLLAL), 206–226 (GELFFTYLIWYSVGRFFVEGL), and 236–256 (LRIAQVMSIGLVVISIIFIIV).

It belongs to the Lgt family.

The protein localises to the cell membrane. The enzyme catalyses L-cysteinyl-[prolipoprotein] + a 1,2-diacyl-sn-glycero-3-phospho-(1'-sn-glycerol) = an S-1,2-diacyl-sn-glyceryl-L-cysteinyl-[prolipoprotein] + sn-glycerol 1-phosphate + H(+). It functions in the pathway protein modification; lipoprotein biosynthesis (diacylglyceryl transfer). In terms of biological role, catalyzes the transfer of the diacylglyceryl group from phosphatidylglycerol to the sulfhydryl group of the N-terminal cysteine of a prolipoprotein, the first step in the formation of mature lipoproteins. This Bacillus cereus (strain Q1) protein is Phosphatidylglycerol--prolipoprotein diacylglyceryl transferase.